A 304-amino-acid chain; its full sequence is Cell surface-binding protein OPG105 (304 aa).

In terms of domain architecture, Alpha-carbonic anhydrase spans 1 to 235 (MPQQLSPINI…NDDTQVYYSG (235 aa)). The Virion surface segment spans residues 1–275 (MPQQLSPINI…YQKYIEGNKT (275 aa)). A helical transmembrane segment spans residues 276–294 (FAIIAIVFVFILTAILFLM). Over 295-304 (SRRYSREKQN) the chain is Intravirion.

The protein belongs to the alpha-carbonic anhydrase family. In terms of assembly, homodimer; disulfide-linked. In terms of processing, apparently non-glycosylated.

The protein resides in the virion membrane. Binds to chondroitin sulfate on the cell surface to provide virion attachment to target cell. In Vaccinia virus (strain Copenhagen) (VACV), this protein is Cell surface-binding protein OPG105 (OPG105).